Consider the following 332-residue polypeptide: Isopentenyl-diphosphate delta-isomerase (332 aa).

6-7 is a substrate binding site; that stretch reads RK. FMN-binding positions include 65–67, S95, and N123; that span reads AMT. Position 95 to 97 (95 to 97) interacts with substrate; the sequence is SGR. Substrate is bound at residue Q157. E158 serves as a coordination point for Mg(2+). Residues K187, T217, 264-266, A285, and 285-286 each bind FMN; these read GVY and AR.

The protein belongs to the IPP isomerase type 2 family. As to quaternary structure, homooctamer. Dimer of tetramers. Requires FMN as cofactor. NADPH serves as cofactor. It depends on Mg(2+) as a cofactor.

Its subcellular location is the cytoplasm. The catalysed reaction is isopentenyl diphosphate = dimethylallyl diphosphate. Its activity is regulated as follows. Competitively inhibited by N,N-dimethyl-2-amino-1-ethyl diphosphate (NIPP) and isopentyl diphosphate. Involved in the biosynthesis of isoprenoids. Catalyzes the 1,3-allylic rearrangement of the homoallylic substrate isopentenyl (IPP) to its allylic isomer, dimethylallyl diphosphate (DMAPP). This Thermus thermophilus (strain ATCC BAA-163 / DSM 7039 / HB27) protein is Isopentenyl-diphosphate delta-isomerase.